Consider the following 287-residue polypeptide: Ribosomal RNA small subunit methyltransferase I (287 aa).

It belongs to the methyltransferase superfamily. RsmI family.

Its subcellular location is the cytoplasm. The catalysed reaction is cytidine(1402) in 16S rRNA + S-adenosyl-L-methionine = 2'-O-methylcytidine(1402) in 16S rRNA + S-adenosyl-L-homocysteine + H(+). In terms of biological role, catalyzes the 2'-O-methylation of the ribose of cytidine 1402 (C1402) in 16S rRNA. The protein is Ribosomal RNA small subunit methyltransferase I of Streptococcus pyogenes serotype M3 (strain ATCC BAA-595 / MGAS315).